The chain runs to 435 residues: Trigger factor (435 aa).

The region spanning 163–248 (GDFVTFDFKG…VKEIKVKELP (86 aa)) is the PPIase FKBP-type domain.

Belongs to the FKBP-type PPIase family. Tig subfamily.

The protein localises to the cytoplasm. The enzyme catalyses [protein]-peptidylproline (omega=180) = [protein]-peptidylproline (omega=0). Functionally, involved in protein export. Acts as a chaperone by maintaining the newly synthesized protein in an open conformation. Functions as a peptidyl-prolyl cis-trans isomerase. The chain is Trigger factor from Geobacter sp. (strain M21).